We begin with the raw amino-acid sequence, 429 residues long: 3-phosphoshikimate 1-carboxyvinyltransferase (429 aa).

K23, S24, and R28 together coordinate 3-phosphoshikimate. K23 is a binding site for phosphoenolpyruvate. Positions 97 and 125 each coordinate phosphoenolpyruvate. Positions 170, 171, 172, 198, 314, 338, and 342 each coordinate 3-phosphoshikimate. Q172 contributes to the phosphoenolpyruvate binding site. D314 serves as the catalytic Proton acceptor. Phosphoenolpyruvate contacts are provided by R346, R388, and K413.

This sequence belongs to the EPSP synthase family. Monomer.

It is found in the cytoplasm. The catalysed reaction is 3-phosphoshikimate + phosphoenolpyruvate = 5-O-(1-carboxyvinyl)-3-phosphoshikimate + phosphate. It functions in the pathway metabolic intermediate biosynthesis; chorismate biosynthesis; chorismate from D-erythrose 4-phosphate and phosphoenolpyruvate: step 6/7. Its function is as follows. Catalyzes the transfer of the enolpyruvyl moiety of phosphoenolpyruvate (PEP) to the 5-hydroxyl of shikimate-3-phosphate (S3P) to produce enolpyruvyl shikimate-3-phosphate and inorganic phosphate. In Pectobacterium atrosepticum (strain SCRI 1043 / ATCC BAA-672) (Erwinia carotovora subsp. atroseptica), this protein is 3-phosphoshikimate 1-carboxyvinyltransferase.